We begin with the raw amino-acid sequence, 452 residues long: Diphthine methyltransferase (452 aa).

7 WD repeats span residues 79-130, 131-185, 186-229, 230-273, 274-313, 314-403, and 404-448; these read PLVE…SHVL, EPLS…RPRL, QKVA…RVPG, KFLF…RNMK, QPLA…LNCQ, KAME…TEGM, and RKNG…HLWE. Position 353 is a phosphoserine (Ser353). Residues 371–402 form a disordered region; sequence SELPTPCHECREDNDGEGHARPQSGMKPLTEG. The span at 378-390 shows a compositional bias: basic and acidic residues; it reads HECREDNDGEGHA.

The protein belongs to the DPH7 family. In terms of assembly, interacts with INCA1.

It catalyses the reaction diphthine methyl ester-[translation elongation factor 2] + H2O = diphthine-[translation elongation factor 2] + methanol + H(+). It functions in the pathway protein modification; peptidyl-diphthamide biosynthesis. Catalyzes the demethylation of diphthine methyl ester to form diphthine, an intermediate diphthamide biosynthesis, a post-translational modification of histidine which occurs in translation elongation factor 2 (EEF2) which can be ADP-ribosylated by diphtheria toxin and by Pseudomonas exotoxin A (Eta). This is Diphthine methyltransferase (DPH7) from Homo sapiens (Human).